A 918-amino-acid polypeptide reads, in one-letter code: uncharacterized protein (918 aa).

7 disordered regions span residues 66–150, 226–283, 326–481, 515–548, 594–707, 737–774, and 800–918; these read AMVH…SSYG, GADG…NADF, ADGT…EFGN, ALEK…GSNL, EITH…NAVK, NHSN…SHLT, and HITH…IIQM. A compositionally biased stretch (low complexity) spans 79–89; sequence QSSGSSSNTHS. Residues 103-127 are compositionally biased toward basic and acidic residues; sequence NSEKKDGYNKESKVDEANENTKIKS. The span at 270–281 shows a compositional bias: low complexity; it reads SKKAASASGSNA. Polar residues-rich tracts occupy residues 326–354, 363–372, and 379–404; these read ADGT…SSDL, KSHSTSNKTD, and ANQS…SSIE. Low complexity predominate over residues 430 to 441; it reads SSSHSKSASGTS. The segment covering 515 to 533 has biased composition (basic and acidic residues); sequence ALEKNHEKNSDGTFKDESK. Composition is skewed to polar residues over residues 534–545 and 604–619; these read GSNSRVNRTDGG and VAAS…TSMS. Low complexity predominate over residues 632–647; that stretch reads SSQAADSHDAISASSD. Over residues 648–660 the composition is skewed to basic and acidic residues; sequence VDAKIVKHADRSE. The span at 661–672 shows a compositional bias: polar residues; sequence SISNDSSNQTAS. The segment covering 673-688 has biased composition (basic and acidic residues); sequence EHNDSSKQSEHEKRQN. Polar residues predominate over residues 689-702; that stretch reads ADGSFSDVSSNSAK. Basic and acidic residues-rich tracts occupy residues 738 to 765, 800 to 814, 830 to 846, and 883 to 918; these read HSND…DAKH, HITH…DAGH, EGFK…EGAQ, and LAKD…IIQM.

This is an uncharacterized protein from Caenorhabditis elegans.